A 94-amino-acid polypeptide reads, in one-letter code: MITRNDVEYVANLARLTLTEEEIEKMTKELGAIIEFANKLSDLDTEGIEPTAHVLNLYNVFRSDEVKPSYPREEILKNAPSHDDVCIKVPKIVE.

The protein belongs to the GatC family. In terms of assembly, heterotrimer of A, B and C subunits.

It carries out the reaction L-glutamyl-tRNA(Gln) + L-glutamine + ATP + H2O = L-glutaminyl-tRNA(Gln) + L-glutamate + ADP + phosphate + H(+). The enzyme catalyses L-aspartyl-tRNA(Asn) + L-glutamine + ATP + H2O = L-asparaginyl-tRNA(Asn) + L-glutamate + ADP + phosphate + 2 H(+). Its function is as follows. Allows the formation of correctly charged Asn-tRNA(Asn) or Gln-tRNA(Gln) through the transamidation of misacylated Asp-tRNA(Asn) or Glu-tRNA(Gln) in organisms which lack either or both of asparaginyl-tRNA or glutaminyl-tRNA synthetases. The reaction takes place in the presence of glutamine and ATP through an activated phospho-Asp-tRNA(Asn) or phospho-Glu-tRNA(Gln). This chain is Aspartyl/glutamyl-tRNA(Asn/Gln) amidotransferase subunit C, found in Caldicellulosiruptor saccharolyticus (strain ATCC 43494 / DSM 8903 / Tp8T 6331).